Here is a 364-residue protein sequence, read N- to C-terminus: Peptide chain release factor 1 (364 aa).

Residue Q230 is modified to N5-methylglutamine.

Belongs to the prokaryotic/mitochondrial release factor family. Post-translationally, methylated by PrmC. Methylation increases the termination efficiency of RF1.

The protein resides in the cytoplasm. Peptide chain release factor 1 directs the termination of translation in response to the peptide chain termination codons UAG and UAA. This Acidothermus cellulolyticus (strain ATCC 43068 / DSM 8971 / 11B) protein is Peptide chain release factor 1.